The following is a 302-amino-acid chain: Sulfate adenylyltransferase subunit 2 (302 aa).

The interval 280–302 is disordered; that stretch reads RQGRVIDHDQAGSMEQKKREGYF.

This sequence belongs to the PAPS reductase family. CysD subfamily. Heterodimer composed of CysD, the smaller subunit, and CysN.

The enzyme catalyses sulfate + ATP + H(+) = adenosine 5'-phosphosulfate + diphosphate. Its pathway is sulfur metabolism; hydrogen sulfide biosynthesis; sulfite from sulfate: step 1/3. With CysN forms the ATP sulfurylase (ATPS) that catalyzes the adenylation of sulfate producing adenosine 5'-phosphosulfate (APS) and diphosphate, the first enzymatic step in sulfur assimilation pathway. APS synthesis involves the formation of a high-energy phosphoric-sulfuric acid anhydride bond driven by GTP hydrolysis by CysN coupled to ATP hydrolysis by CysD. The polypeptide is Sulfate adenylyltransferase subunit 2 (Hahella chejuensis (strain KCTC 2396)).